We begin with the raw amino-acid sequence, 65 residues long: Large ribosomal subunit protein bL35 (65 aa).

A disordered region spans residues 1–28; sequence MPKMKTNRSAAKRFGKTGSGKFTRRRQN.

Belongs to the bacterial ribosomal protein bL35 family.

This is Large ribosomal subunit protein bL35 from Solidesulfovibrio magneticus (strain ATCC 700980 / DSM 13731 / RS-1) (Desulfovibrio magneticus).